The primary structure comprises 154 residues: Myoglobin (154 aa).

The region spanning G2–K148 is the Globin domain. S4 is modified (phosphoserine). H65 provides a ligand contact to nitrite. O2 is bound at residue H65. T68 bears the Phosphothreonine mark. A heme b-binding site is contributed by H94.

Belongs to the globin family. As to quaternary structure, monomeric.

The protein resides in the cytoplasm. Its subcellular location is the sarcoplasm. It carries out the reaction Fe(III)-heme b-[protein] + nitric oxide + H2O = Fe(II)-heme b-[protein] + nitrite + 2 H(+). The catalysed reaction is H2O2 + AH2 = A + 2 H2O. Its function is as follows. Monomeric heme protein which primary function is to store oxygen and facilitate its diffusion within muscle tissues. Reversibly binds oxygen through a pentacoordinated heme iron and enables its timely and efficient release as needed during periods of heightened demand. Depending on the oxidative conditions of tissues and cells, and in addition to its ability to bind oxygen, it also has a nitrite reductase activity whereby it regulates the production of bioactive nitric oxide. Under stress conditions, like hypoxia and anoxia, it also protects cells against reactive oxygen species thanks to its pseudoperoxidase activity. This chain is Myoglobin (MB), found in Mesoplodon carlhubbsi (Hubb's beaked whale).